A 552-amino-acid chain; its full sequence is Nucleoside-diphosphatase mig-23 (552 aa).

At 1–6 (MRVSLR) the chain is on the cytoplasmic side. Residues 7 to 27 (FTILAVSAMIFFPVIVFIYVV) form a helical membrane-spanning segment. The Lumenal segment spans residues 28–489 (EAHTSPKVIA…IVKETHSSSE (462 aa)). E174 functions as the Proton acceptor in the catalytic mechanism. N190 and N284 each carry an N-linked (GlcNAc...) asparagine glycan. The chain crosses the membrane as a helical span at residues 490–510 (SLWAPLFFLSAVFCLFVLVCA). At 511–552 (KEQSVLCFDDKRRSSFGMSRSQYSYKMLKENRTSSSFLENFA) the chain is on the cytoplasmic side.

Belongs to the GDA1/CD39 NTPase family. In terms of tissue distribution, expressed in body wall muscles.

It is found in the golgi apparatus membrane. The catalysed reaction is a ribonucleoside 5'-diphosphate + H2O = a ribonucleoside 5'-phosphate + phosphate + H(+). Its function is as follows. Seems to be able to hydrolyze ADP, UDP and GDP. Supports mig-17 glycosylation and surface expression, which is required for proper migration of distal tip cells during gonad morphogenesis. This Caenorhabditis elegans protein is Nucleoside-diphosphatase mig-23 (mig-23).